A 105-amino-acid chain; its full sequence is Large ribosomal subunit protein bL21 (105 aa).

Belongs to the bacterial ribosomal protein bL21 family. As to quaternary structure, part of the 50S ribosomal subunit. Contacts protein L20.

Its function is as follows. This protein binds to 23S rRNA in the presence of protein L20. The protein is Large ribosomal subunit protein bL21 of Parabacteroides distasonis (strain ATCC 8503 / DSM 20701 / CIP 104284 / JCM 5825 / NCTC 11152).